Reading from the N-terminus, the 512-residue chain is Glutathione-binding protein GsiB (512 aa).

A signal peptide spans 1–26 (MARAVHRSGLVALGIATALMASCAFA).

This sequence belongs to the bacterial solute-binding protein 5 family. The complex is composed of two ATP-binding proteins (GsiA), two transmembrane proteins (GsiC and GsiD) and a solute-binding protein (GsiB).

The protein resides in the periplasm. Its function is as follows. Part of the ABC transporter complex GsiABCD involved in glutathione import. Binds glutathione. The protein is Glutathione-binding protein GsiB of Shigella flexneri.